Consider the following 132-residue polypeptide: Small ribosomal subunit protein uS8c (132 aa).

It belongs to the universal ribosomal protein uS8 family. As to quaternary structure, part of the 30S ribosomal subunit.

It is found in the plastid. The protein resides in the chloroplast. Functionally, one of the primary rRNA binding proteins, it binds directly to 16S rRNA central domain where it helps coordinate assembly of the platform of the 30S subunit. This chain is Small ribosomal subunit protein uS8c (rps8), found in Zygnema circumcarinatum (Green alga).